The following is a 475-amino-acid chain: Ribulose bisphosphate carboxylase large chain (475 aa).

The propeptide occupies M1–A2. P3 is subject to N-acetylproline. K14 carries the post-translational modification N6,N6,N6-trimethyllysine. Positions 123 and 173 each coordinate substrate. The Proton acceptor role is filled by K175. K177 is a substrate binding site. 3 residues coordinate Mg(2+): K201, D203, and E204. K201 bears the N6-carboxylysine mark. Residue H294 is the Proton acceptor of the active site. The substrate site is built by R295, H327, and S379.

The protein belongs to the RuBisCO large chain family. Type I subfamily. As to quaternary structure, heterohexadecamer of 8 large chains and 8 small chains. Mg(2+) serves as cofactor.

The protein localises to the plastid. The protein resides in the chloroplast. It carries out the reaction 2 (2R)-3-phosphoglycerate + 2 H(+) = D-ribulose 1,5-bisphosphate + CO2 + H2O. The catalysed reaction is D-ribulose 1,5-bisphosphate + O2 = 2-phosphoglycolate + (2R)-3-phosphoglycerate + 2 H(+). RuBisCO catalyzes two reactions: the carboxylation of D-ribulose 1,5-bisphosphate, the primary event in carbon dioxide fixation, as well as the oxidative fragmentation of the pentose substrate in the photorespiration process. Both reactions occur simultaneously and in competition at the same active site. The protein is Ribulose bisphosphate carboxylase large chain of Nephroselmis olivacea (Green alga).